Reading from the N-terminus, the 269-residue chain is Probable cytochrome c oxidase subunit 2 (269 aa).

3 helical membrane passes run 8–28, 50–70, and 87–107; these read ITLI…PLPW, LLYI…FVCI, and ILIE…IAVP. Residues His189, Cys224, Cys228, and His232 each coordinate Cu cation.

The protein belongs to the cytochrome c oxidase subunit 2 family. It depends on Cu cation as a cofactor. Heme is required as a cofactor.

Its subcellular location is the cell membrane. It catalyses the reaction 4 Fe(II)-[cytochrome c] + O2 + 8 H(+)(in) = 4 Fe(III)-[cytochrome c] + 2 H2O + 4 H(+)(out). Subunits I and II form the functional core of the enzyme complex. Electrons originating in cytochrome c are transferred via heme a and Cu(A) to the binuclear center formed by heme a3 and Cu(B). In Rickettsia bellii (strain RML369-C), this protein is Probable cytochrome c oxidase subunit 2 (ctaC).